Here is a 392-residue protein sequence, read N- to C-terminus: Enoyl-[acyl-carrier-protein] reductase [NADH] (392 aa).

NAD(+) is bound by residues 46 to 51 (GSSSGY), 72 to 73 (LE), 108 to 109 (DA), and 136 to 137 (VA). Tyr225 is a binding site for substrate. Tyr235 acts as the Proton donor in catalysis. Residues Lys244 and 273–275 (LVT) contribute to the NAD(+) site.

It belongs to the TER reductase family. In terms of assembly, monomer.

The enzyme catalyses a 2,3-saturated acyl-[ACP] + NAD(+) = a (2E)-enoyl-[ACP] + NADH + H(+). It functions in the pathway lipid metabolism; fatty acid biosynthesis. In terms of biological role, involved in the final reduction of the elongation cycle of fatty acid synthesis (FAS II). Catalyzes the reduction of a carbon-carbon double bond in an enoyl moiety that is covalently linked to an acyl carrier protein (ACP). This is Enoyl-[acyl-carrier-protein] reductase [NADH] from Streptomyces avermitilis (strain ATCC 31267 / DSM 46492 / JCM 5070 / NBRC 14893 / NCIMB 12804 / NRRL 8165 / MA-4680).